An 89-amino-acid polypeptide reads, in one-letter code: Small ribosomal subunit protein uS15 (89 aa).

Belongs to the universal ribosomal protein uS15 family. As to quaternary structure, part of the 30S ribosomal subunit. Forms a bridge to the 50S subunit in the 70S ribosome, contacting the 23S rRNA.

One of the primary rRNA binding proteins, it binds directly to 16S rRNA where it helps nucleate assembly of the platform of the 30S subunit by binding and bridging several RNA helices of the 16S rRNA. Functionally, forms an intersubunit bridge (bridge B4) with the 23S rRNA of the 50S subunit in the ribosome. This is Small ribosomal subunit protein uS15 from Corynebacterium kroppenstedtii (strain DSM 44385 / JCM 11950 / CIP 105744 / CCUG 35717).